Reading from the N-terminus, the 576-residue chain is Probable lysosomal cobalamin transporter (576 aa).

10 helical membrane passes run 8–28 (LIWA…SVFI), 40–60 (VVTF…LLLP), 98–118 (YLLY…VYFW), 145–165 (TISF…VPVA), 188–208 (VLTF…ILYT), 312–332 (LLGG…MLLT), 347–367 (GYIL…VQSA), 377–397 (LTVV…TIGI), 419–439 (LTTA…PMLV), and 503–523 (FFGT…LLVL). Positions 549 to 576 (RLLTSSARGVGDTYQSVGGRNNFSTRAG) are disordered. The segment covering 561-576 (TYQSVGGRNNFSTRAG) has biased composition (polar residues). N570 is a glycosylation site (N-linked (GlcNAc...) asparagine).

This sequence belongs to the LIMR family. LMBRD1 subfamily.

It is found in the lysosome membrane. Its function is as follows. Probable lysosomal cobalamin transporter. Required to export cobalamin from lysosomes allowing its conversion to cofactors. The polypeptide is Probable lysosomal cobalamin transporter (Aspergillus niger (strain ATCC MYA-4892 / CBS 513.88 / FGSC A1513)).